Consider the following 258-residue polypeptide: 3-deoxy-manno-octulosonate cytidylyltransferase (258 aa).

This sequence belongs to the KdsB family.

Its subcellular location is the cytoplasm. It catalyses the reaction 3-deoxy-alpha-D-manno-oct-2-ulosonate + CTP = CMP-3-deoxy-beta-D-manno-octulosonate + diphosphate. The protein operates within nucleotide-sugar biosynthesis; CMP-3-deoxy-D-manno-octulosonate biosynthesis; CMP-3-deoxy-D-manno-octulosonate from 3-deoxy-D-manno-octulosonate and CTP: step 1/1. It functions in the pathway bacterial outer membrane biogenesis; lipopolysaccharide biosynthesis. Functionally, activates KDO (a required 8-carbon sugar) for incorporation into bacterial lipopolysaccharide in Gram-negative bacteria. The sequence is that of 3-deoxy-manno-octulosonate cytidylyltransferase from Blochmanniella floridana.